Consider the following 936-residue polypeptide: Bifunctional uridylyltransferase/uridylyl-removing enzyme (936 aa).

The tract at residues 1–372 is uridylyltransferase; that stretch reads MTIPRIRQPR…SIATLLMRKR (372 aa). The uridylyl-removing stretch occupies residues 373-727; that stretch reads NLGDFVLDGG…VLPDPERAVS (355 aa). Residues 488–610 enclose the HD domain; the sequence is TDEHTIRAIG…VQSVERLHLL (123 aa). 2 consecutive ACT domains span residues 728-809 and 840-915; these read EVLV…KALR and VIEI…TVPR. Basic and acidic residues predominate over residues 915 to 930; that stretch reads RKVEEGAEQGAEKADA. The tract at residues 915–936 is disordered; sequence RKVEEGAEQGAEKADAGEIVAA.

The protein belongs to the GlnD family. Mg(2+) is required as a cofactor.

It catalyses the reaction [protein-PII]-L-tyrosine + UTP = [protein-PII]-uridylyl-L-tyrosine + diphosphate. The catalysed reaction is [protein-PII]-uridylyl-L-tyrosine + H2O = [protein-PII]-L-tyrosine + UMP + H(+). Its activity is regulated as follows. Uridylyltransferase (UTase) activity is inhibited by glutamine, while glutamine activates uridylyl-removing (UR) activity. In terms of biological role, modifies, by uridylylation and deuridylylation, the PII regulatory proteins (GlnB and homologs), in response to the nitrogen status of the cell that GlnD senses through the glutamine level. Under low glutamine levels, catalyzes the conversion of the PII proteins and UTP to PII-UMP and PPi, while under higher glutamine levels, GlnD hydrolyzes PII-UMP to PII and UMP (deuridylylation). Thus, controls uridylylation state and activity of the PII proteins, and plays an important role in the regulation of nitrogen fixation and metabolism. The protein is Bifunctional uridylyltransferase/uridylyl-removing enzyme of Rhodospirillum rubrum (strain ATCC 11170 / ATH 1.1.1 / DSM 467 / LMG 4362 / NCIMB 8255 / S1).